Here is a 493-residue protein sequence, read N- to C-terminus: Inosine-5'-monophosphate dehydrogenase (493 aa).

CBS domains follow at residues 97-155 (VIID…NAPI) and 159-219 (MTSE…AKDE). Residues Asp-253 and 303-305 (GIG) each bind NAD(+). 2 residues coordinate K(+): Gly-305 and Gly-307. Ser-308 serves as a coordination point for IMP. Cys-310 contributes to the K(+) binding site. The active-site Thioimidate intermediate is the Cys-310. IMP is bound by residues 343–345 (DGG), 366–367 (GS), and 390–394 (YRGMG). The active-site Proton acceptor is the Arg-406. Glu-421 lines the IMP pocket. K(+) is bound by residues Glu-475, Ser-476, and His-477.

This sequence belongs to the IMPDH/GMPR family. As to quaternary structure, homotetramer. It depends on K(+) as a cofactor.

The enzyme catalyses IMP + NAD(+) + H2O = XMP + NADH + H(+). The protein operates within purine metabolism; XMP biosynthesis via de novo pathway; XMP from IMP: step 1/1. With respect to regulation, mycophenolic acid (MPA) is a non-competitive inhibitor that prevents formation of the closed enzyme conformation by binding to the same site as the amobile flap. In contrast, mizoribine monophosphate (MZP) is a competitive inhibitor that induces the closed conformation. MPA is a potent inhibitor of mammalian IMPDHs but a poor inhibitor of the bacterial enzymes. MZP is a more potent inhibitor of bacterial IMPDH. Its function is as follows. Catalyzes the conversion of inosine 5'-phosphate (IMP) to xanthosine 5'-phosphate (XMP), the first committed and rate-limiting step in the de novo synthesis of guanine nucleotides, and therefore plays an important role in the regulation of cell growth. The protein is Inosine-5'-monophosphate dehydrogenase of Streptococcus pyogenes serotype M3 (strain ATCC BAA-595 / MGAS315).